A 466-amino-acid polypeptide reads, in one-letter code: 3-isopropylmalate dehydratase large subunit (466 aa).

Positions 347, 407, and 410 each coordinate [4Fe-4S] cluster.

It belongs to the aconitase/IPM isomerase family. LeuC type 1 subfamily. Heterodimer of LeuC and LeuD. [4Fe-4S] cluster serves as cofactor.

It catalyses the reaction (2R,3S)-3-isopropylmalate = (2S)-2-isopropylmalate. It participates in amino-acid biosynthesis; L-leucine biosynthesis; L-leucine from 3-methyl-2-oxobutanoate: step 2/4. Its function is as follows. Catalyzes the isomerization between 2-isopropylmalate and 3-isopropylmalate, via the formation of 2-isopropylmaleate. This chain is 3-isopropylmalate dehydratase large subunit, found in Shigella boydii serotype 4 (strain Sb227).